The following is a 213-amino-acid chain: Pyrrolidone-carboxylate peptidase (213 aa).

Catalysis depends on residues Glu-80, Cys-143, and His-166.

This sequence belongs to the peptidase C15 family. Homotetramer.

It localises to the cytoplasm. It carries out the reaction Release of an N-terminal pyroglutamyl group from a polypeptide, the second amino acid generally not being Pro.. Functionally, removes 5-oxoproline from various penultimate amino acid residues except L-proline. In Clavibacter michiganensis subsp. michiganensis (strain NCPPB 382), this protein is Pyrrolidone-carboxylate peptidase.